The chain runs to 354 residues: Galactose-1-phosphate uridylyltransferase (354 aa).

Residues threonine 36–leucine 72 form a disordered region. Cysteine 70, cysteine 73, and histidine 114 together coordinate Zn(2+). Position 154 (asparagine 154) interacts with UDP-alpha-D-glucose. Histidine 165 is a Zn(2+) binding site. Catalysis depends on histidine 167, which acts as the Tele-UMP-histidine intermediate. UDP-alpha-D-glucose is bound by residues glutamine 169 and glutamine 332.

This sequence belongs to the galactose-1-phosphate uridylyltransferase type 1 family. The cofactor is Zn(2+).

The enzyme catalyses alpha-D-galactose 1-phosphate + UDP-alpha-D-glucose = alpha-D-glucose 1-phosphate + UDP-alpha-D-galactose. The protein operates within carbohydrate metabolism; galactose metabolism. The chain is Galactose-1-phosphate uridylyltransferase (galT) from Streptomyces lividans.